Consider the following 115-residue polypeptide: Cell division protein FtsL (115 aa).

At 1-25 the chain is on the cytoplasmic side; the sequence is MNTATRVIVAQNVRTRNRTFQITKQ. A helical membrane pass occupies residues 26–46; that stretch reads GVVIVALVIALLCSAFGVVYF. Over 47–115 the chain is Periplasmic; it reads KDLNRRLFIQ…ILVNADAMIE (69 aa).

The protein belongs to the FtsL family. Part of a complex composed of FtsB, FtsL and FtsQ.

Its subcellular location is the cell inner membrane. In terms of biological role, essential cell division protein. May link together the upstream cell division proteins, which are predominantly cytoplasmic, with the downstream cell division proteins, which are predominantly periplasmic. This is Cell division protein FtsL from Coxiella burnetii (strain RSA 493 / Nine Mile phase I).